We begin with the raw amino-acid sequence, 111 residues long: Putative ciliary rootlet coiled-coil protein-like 1 protein (111 aa).

A coiled-coil region spans residues 21 to 86 (MELELSVTKL…RQAEQEATVA (66 aa)).

This sequence belongs to the rootletin family.

The sequence is that of Putative ciliary rootlet coiled-coil protein-like 1 protein (CROCCP2) from Homo sapiens (Human).